A 479-amino-acid polypeptide reads, in one-letter code: Aspartyl/glutamyl-tRNA(Asn/Gln) amidotransferase subunit B (479 aa).

The protein belongs to the GatB/GatE family. GatB subfamily. As to quaternary structure, heterotrimer of A, B and C subunits.

It carries out the reaction L-glutamyl-tRNA(Gln) + L-glutamine + ATP + H2O = L-glutaminyl-tRNA(Gln) + L-glutamate + ADP + phosphate + H(+). It catalyses the reaction L-aspartyl-tRNA(Asn) + L-glutamine + ATP + H2O = L-asparaginyl-tRNA(Asn) + L-glutamate + ADP + phosphate + 2 H(+). Functionally, allows the formation of correctly charged Asn-tRNA(Asn) or Gln-tRNA(Gln) through the transamidation of misacylated Asp-tRNA(Asn) or Glu-tRNA(Gln) in organisms which lack either or both of asparaginyl-tRNA or glutaminyl-tRNA synthetases. The reaction takes place in the presence of glutamine and ATP through an activated phospho-Asp-tRNA(Asn) or phospho-Glu-tRNA(Gln). The polypeptide is Aspartyl/glutamyl-tRNA(Asn/Gln) amidotransferase subunit B (Clostridium beijerinckii (strain ATCC 51743 / NCIMB 8052) (Clostridium acetobutylicum)).